The chain runs to 226 residues: Urease accessory protein UreF (226 aa).

It belongs to the UreF family. As to quaternary structure, ureD, UreF and UreG form a complex that acts as a GTP-hydrolysis-dependent molecular chaperone, activating the urease apoprotein by helping to assemble the nickel containing metallocenter of UreC. The UreE protein probably delivers the nickel.

The protein localises to the cytoplasm. In terms of biological role, required for maturation of urease via the functional incorporation of the urease nickel metallocenter. The chain is Urease accessory protein UreF from Burkholderia vietnamiensis (strain G4 / LMG 22486) (Burkholderia cepacia (strain R1808)).